We begin with the raw amino-acid sequence, 124 residues long: Small ribosomal subunit protein uS11 (124 aa).

Belongs to the universal ribosomal protein uS11 family. Part of the 30S ribosomal subunit.

Functionally, located on the platform of the 30S subunit. The polypeptide is Small ribosomal subunit protein uS11 (Methanococcus aeolicus (strain ATCC BAA-1280 / DSM 17508 / OCM 812 / Nankai-3)).